The sequence spans 246 residues: Acetoacetate decarboxylase (246 aa).

The Schiff-base intermediate with acetoacetate role is filled by Lys116.

Belongs to the ADC family. As to quaternary structure, homododecamer.

It carries out the reaction acetoacetate + H(+) = acetone + CO2. In terms of biological role, catalyzes the conversion of acetoacetate to acetone and carbon dioxide. This Chromobacterium violaceum (strain ATCC 12472 / DSM 30191 / JCM 1249 / CCUG 213 / NBRC 12614 / NCIMB 9131 / NCTC 9757 / MK) protein is Acetoacetate decarboxylase.